The primary structure comprises 335 residues: Phosphate acyltransferase (335 aa).

Belongs to the PlsX family. As to quaternary structure, homodimer. Probably interacts with PlsY.

The protein localises to the cytoplasm. The enzyme catalyses a fatty acyl-[ACP] + phosphate = an acyl phosphate + holo-[ACP]. It functions in the pathway lipid metabolism; phospholipid metabolism. In terms of biological role, catalyzes the reversible formation of acyl-phosphate (acyl-PO(4)) from acyl-[acyl-carrier-protein] (acyl-ACP). This enzyme utilizes acyl-ACP as fatty acyl donor, but not acyl-CoA. The polypeptide is Phosphate acyltransferase (Streptococcus pyogenes serotype M1).